We begin with the raw amino-acid sequence, 434 residues long: Putative G3BP-like protein (434 aa).

The 117-residue stretch at 18–134 folds into the NTF2 domain; it reads IGWMFVQEYY…YFVLNDIFRF (117 aa). Disordered regions lie at residues 141–180 and 274–308; these read EEEESPDAVEKEKKDVASEPYVNGVQSQEHLPSAKEEGHY and VKSQASVSSTASTTGQTVKGVNADQTQQPTAPYTQ. Phosphoserine is present on S145. Basic and acidic residues predominate over residues 148–157; the sequence is AVEKEKKDVA. The segment covering 276–291 has biased composition (low complexity); sequence SQASVSSTASTTGQTV. Over residues 296–308 the composition is skewed to polar residues; sequence ADQTQQPTAPYTQ. Positions 315–386 constitute an RRM domain; it reads TSVFVKNIPP…ATLNIEERRR (72 aa). Residues 390-434 are disordered; the sequence is GKFNKSGDKKSNDNYNGMKRNFRKGNRGAFDGRSKEVTTSKKQNN. Basic and acidic residues predominate over residues 419 to 428; the sequence is FDGRSKEVTT.

Functionally, probable scaffold protein that may be involved in mRNA transport. The sequence is that of Putative G3BP-like protein (nxt3) from Schizosaccharomyces pombe (strain 972 / ATCC 24843) (Fission yeast).